The primary structure comprises 547 residues: RNA polymerase sigma factor sigF, chloroplastic (547 aa).

A compositionally biased stretch (polar residues) spans 1-17; that stretch reads MEATRNLVSSSPSFQTK. Disordered regions lie at residues 1–28 and 54–79; these read MEAT…SSPS and FPAS…DDRT. The N-terminal 55 residues, 1–55, are a transit peptide targeting the chloroplast; that stretch reads MEATRNLVSSSPSFQTKTHLKSSYSSPSSVVMLHDQTTTPVVNSRHLNSLSRHFP. Positions 62 to 79 are enriched in basic and acidic residues; sequence EPREESRPLSHALRDDRT. Phosphoserine; by CK2 occurs at positions 94, 95, 174, 176, 177, and 180. A disordered region spans residues 163–226; it reads ANPSDNIKDS…QKTSAKKKYK (64 aa). Positions 172–181 are enriched in low complexity; it reads SLSTSSSMSL. Phosphothreonine; by CK2 is present on Thr-249. Positions 335–348 match the Polymerase core binding motif; the sequence is DLLQEGSMGLMKSV. A DNA-binding region (H-T-H motif) is located at residues 505 to 524; that stretch reads LSEIGEIYGLSKERVRQLES.

The protein belongs to the sigma-70 factor family. As to quaternary structure, interacts (via N-terminus) with DG1 (via C-terminus). In terms of processing, phosphorylated to acquire sigma activity; site-specific phosphorylation regulates promoter affinity. Phosphorylation at Ser-174 by chloroplastic CK2 requires prior phosphorylation at Ser-177. Phosphorylation at either Ser-94, Ser-95 or Ser-174 is required for sigma activation. As to expression, expressed in seedling, accumulating progressively. Present in leaves but not in roots.

It is found in the plastid. It localises to the chloroplast. Functionally, sigma factors are initiation factors that promote the attachment of plastid-encoded RNA polymerase (PEP) to specific initiation sites and are then released. Regulates transcription in chloroplast in a DG1-dependent manner. Involved in light-dependent chloroplast development. Required during early plant development and primary leaf formation. The polypeptide is RNA polymerase sigma factor sigF, chloroplastic (SIGF) (Arabidopsis thaliana (Mouse-ear cress)).